A 296-amino-acid polypeptide reads, in one-letter code: Glycine--tRNA ligase alpha subunit (296 aa).

The protein belongs to the class-II aminoacyl-tRNA synthetase family. Tetramer of two alpha and two beta subunits.

The protein localises to the cytoplasm. It carries out the reaction tRNA(Gly) + glycine + ATP = glycyl-tRNA(Gly) + AMP + diphosphate. This is Glycine--tRNA ligase alpha subunit from Desulfitobacterium hafniense (strain DSM 10664 / DCB-2).